We begin with the raw amino-acid sequence, 152 residues long: Ubiquitin-conjugating enzyme E2 W (152 aa).

Residue Met-1 forms a Peptide (Met-Gly) (interchain with G-Cter in ubiquitin) linkage. In terms of domain architecture, UBC core spans 4–152 (AATRRLMKEL…TRWWFHDDSV (149 aa)). Residue Cys-92 is the Glycyl thioester intermediate of the active site.

This sequence belongs to the ubiquitin-conjugating enzyme family.

It carries out the reaction S-ubiquitinyl-[E1 ubiquitin-activating enzyme]-L-cysteine + [E2 ubiquitin-conjugating enzyme]-L-cysteine = [E1 ubiquitin-activating enzyme]-L-cysteine + S-ubiquitinyl-[E2 ubiquitin-conjugating enzyme]-L-cysteine.. The enzyme catalyses S-ubiquitinyl-[E1 ubiquitin-activating enzyme]-L-cysteine + [acceptor protein]-N-terminal-amino acid = [E1 ubiquitin-activating enzyme]-L-cysteine + N-terminal-ubiquitinyl-[acceptor protein].. It participates in protein modification; protein ubiquitination. Accepts ubiquitin from the E1 complex and catalyzes its covalent attachment to other proteins. Together with ubc-18, required for the ubiquitination of membranous organelles, and the removal of paternal mitochondria from early embryos. This Caenorhabditis elegans protein is Ubiquitin-conjugating enzyme E2 W.